The chain runs to 130 residues: Small ribosomal subunit protein uS11 (130 aa).

Belongs to the universal ribosomal protein uS11 family. In terms of assembly, part of the 30S ribosomal subunit. Interacts with proteins S7 and S18. Binds to IF-3.

Its function is as follows. Located on the platform of the 30S subunit, it bridges several disparate RNA helices of the 16S rRNA. Forms part of the Shine-Dalgarno cleft in the 70S ribosome. The chain is Small ribosomal subunit protein uS11 from Campylobacter hominis (strain ATCC BAA-381 / DSM 21671 / CCUG 45161 / LMG 19568 / NCTC 13146 / CH001A).